The chain runs to 526 residues: Cytochrome P450 52A5 (526 aa).

The chain crosses the membrane as a helical span at residues 18–38 (WYVIVPLAIIIYKVFDYFYVL). Cys-473 serves as a coordination point for heme.

Belongs to the cytochrome P450 family. The cofactor is heme.

The protein resides in the membrane. Together with an NADPH cytochrome P450 the enzyme system catalyzes the terminal hydroxylation as the first step in the assimilation of alkanes and fatty acids. The chain is Cytochrome P450 52A5 (CYP52A5) from Candida maltosa (Yeast).